We begin with the raw amino-acid sequence, 629 residues long: tRNA uridine 5-carboxymethylaminomethyl modification enzyme MnmG (629 aa).

Residues 13 to 18 (GGGHAG), V125, and S180 contribute to the FAD site. 273-287 (GPRYCPSIEDKVMRF) contacts NAD(+). Q370 serves as a coordination point for FAD.

The protein belongs to the MnmG family. In terms of assembly, homodimer. Heterotetramer of two MnmE and two MnmG subunits. FAD serves as cofactor.

It is found in the cytoplasm. Functionally, NAD-binding protein involved in the addition of a carboxymethylaminomethyl (cmnm) group at the wobble position (U34) of certain tRNAs, forming tRNA-cmnm(5)s(2)U34. This chain is tRNA uridine 5-carboxymethylaminomethyl modification enzyme MnmG, found in Enterobacter sp. (strain 638).